Consider the following 301-residue polypeptide: Probable alpha-L-glutamate ligase 2 (301 aa).

One can recognise an ATP-grasp domain in the interval 104 to 287; that stretch reads LQLLSRKGIG…VAEPIVEYIE (184 aa). Residues Lys-141, 178–179, Asp-187, and 211–213 contribute to the ATP site; these read EY and RSN. Mg(2+) contacts are provided by Asp-248, Glu-260, and Asn-262. 3 residues coordinate Mn(2+): Asp-248, Glu-260, and Asn-262.

Belongs to the RimK family. The cofactor is Mg(2+). Mn(2+) serves as cofactor.

The sequence is that of Probable alpha-L-glutamate ligase 2 from Shewanella amazonensis (strain ATCC BAA-1098 / SB2B).